The primary structure comprises 522 residues: 2-isopropylmalate synthase (522 aa).

A Pyruvate carboxyltransferase domain is found at V5–H267. Positions 14, 202, 204, and 238 each coordinate Mn(2+). Residues Q392 to V522 form a regulatory domain region.

The protein belongs to the alpha-IPM synthase/homocitrate synthase family. LeuA type 1 subfamily. As to quaternary structure, homodimer. It depends on Mn(2+) as a cofactor.

The protein resides in the cytoplasm. It catalyses the reaction 3-methyl-2-oxobutanoate + acetyl-CoA + H2O = (2S)-2-isopropylmalate + CoA + H(+). It functions in the pathway amino-acid biosynthesis; L-leucine biosynthesis; L-leucine from 3-methyl-2-oxobutanoate: step 1/4. Catalyzes the condensation of the acetyl group of acetyl-CoA with 3-methyl-2-oxobutanoate (2-ketoisovalerate) to form 3-carboxy-3-hydroxy-4-methylpentanoate (2-isopropylmalate). The protein is 2-isopropylmalate synthase of Shewanella sp. (strain MR-4).